A 966-amino-acid chain; its full sequence is Receptor protein-tyrosine kinase CEPR1 (966 aa).

The signal sequence occupies residues 1–22 (MRLKNFPFFVLFFFFCFNSNQS). Over 23 to 592 (WGLMSSNQQP…QEPHGKKKLS (570 aa)) the chain is Extracellular. Asparagine 61 carries N-linked (GlcNAc...) asparagine glycosylation. 20 LRR repeats span residues 70–94 (QGLVTDLDLSGLSLSGIFPDGVCSY), 95–120 (FPNLRVLRLSHNHLNKSSSFLNTIPN), 122–144 (SLLRDLNMSSVYLKGTLPDFSQM), 145–168 (KSLRVIDMSWNHFTGSFPLSIFNL), 170–194 (DLEYLNFNENPELDLWTLPDSVSKL), 195–218 (TKLTHMLLMTCMLHGNIPRSIGNL), 219–242 (TSLVDLELSGNFLSGEIPKEIGNL), 245–267 (LRQLELYYNYHLTGSIPEEIGNL), 268–291 (KNLTDIDISVSRLTGSIPDSICSL), 292–315 (PNLRVLQLYNNSLTGEIPKSLGNS), 317–339 (TLKILSLYDNYLTGELPPNLGSS), 341–363 (PMIALDVSENRLSGPLPAHVCKS), 365–386 (KLLYFLVLQNRFTGSIPETYGS), 387–411 (CKTLIRFRVASNRLVGTIPQGVMSL), 412–435 (PHVSIIDLAYNSLSGPIPNAIGNA), 437–459 (NLSELFMQSNRISGVIPHELSHS), 460–483 (TNLVKLDLSNNQLSGPIPSEVGRL), 484–507 (RKLNLLVLQGNHLDSSIPDSLSNL), 508–531 (KSLNVLDLSSNLLTGRIPENLSEL), and 533–554 (PTSINFSSNRLSGPIPVSLIRG). 4 N-linked (GlcNAc...) asparagine glycosylation sites follow: asparagine 109, asparagine 120, asparagine 128, and asparagine 167. N-linked (GlcNAc...) asparagine glycosylation is found at asparagine 217 and asparagine 241. N-linked (GlcNAc...) asparagine glycosylation is found at asparagine 269 and asparagine 301. Asparagine 437 carries an N-linked (GlcNAc...) asparagine glycan. 2 N-linked (GlcNAc...) asparagine glycosylation sites follow: asparagine 527 and asparagine 537. The chain crosses the membrane as a helical span at residues 593–613 (SIWAILVSVFILVLGVIMFYL). Residues 614-966 (RQRMSKNRAV…VSDHLTQTRL (353 aa)) lie on the Cytoplasmic side of the membrane. Residues 656-934 (LVDKNIVGHG…TMNEVVQLLI (279 aa)) form the Protein kinase domain. ATP contacts are provided by residues 662–670 (VGHGGSGTV) and lysine 684. Phosphotyrosine is present on residues tyrosine 738 and tyrosine 775. Aspartate 788 acts as the Proton acceptor in catalysis. Phosphotyrosine occurs at positions 831 and 838. The disordered stretch occupies residues 937–966 (TPQGGPDMTSKPTTKIKDSIVSDHLTQTRL).

Belongs to the protein kinase superfamily. Ser/Thr protein kinase family. Interacts with the root-derived peptides CEP1, CEP3 and CEP5. As to expression, expressed in the vasculature, especially in phloem and procambium regions, of stems, leaves, cotyledons, sepals, pedals, pedicels, hypocotyls and roots (in primary and lateral roots, but not in root tips). Expressed in the root from the basal meristem onward. Present in the phloem pole pericycle and in the adjacent phloem.

Its subcellular location is the cell membrane. The enzyme catalyses L-tyrosyl-[protein] + ATP = O-phospho-L-tyrosyl-[protein] + ADP + H(+). Functionally, receptor kinase involved in the perception of C-terminally encoded plant signaling peptide (CEP) and subsequent regulation of root and shoot development. Required for xylem and phloem cell files morphology and organization, probably by preventing ectopic lignification in phloem cells. Together with CEPR2, mediates systemic nitrogen (N)-demand signaling upon the perception of root-derived peptides (e.g. CEP1) via the up-regulation of genes involved in N uptake and assimilation pathways. Positively regulates lateral root initiation and development; probably repressed by the signaling peptide CEP5. The sequence is that of Receptor protein-tyrosine kinase CEPR1 from Arabidopsis thaliana (Mouse-ear cress).